Reading from the N-terminus, the 201-residue chain is Ribosome maturation factor RimM (201 aa).

Residues 92–166 (DEDEFYHADL…RVVVEPPANF (75 aa)) form the PRC barrel domain. The tract at residues 169–201 (PAGPQPAEGEEMPDGALEALEGEEAGAGTAPQP) is disordered.

The protein belongs to the RimM family. Binds ribosomal protein uS19.

The protein localises to the cytoplasm. Its function is as follows. An accessory protein needed during the final step in the assembly of 30S ribosomal subunit, possibly for assembly of the head region. Essential for efficient processing of 16S rRNA. May be needed both before and after RbfA during the maturation of 16S rRNA. It has affinity for free ribosomal 30S subunits but not for 70S ribosomes. This chain is Ribosome maturation factor RimM, found in Rhodospirillum centenum (strain ATCC 51521 / SW).